The following is a 716-amino-acid chain: Polycystin-2 (716 aa).

2 stretches are compositionally biased toward basic and acidic residues: residues 1–10 (MNYGAADERW) and 30–41 (MVSEEYEHDKKK). Residues 1–44 (MNYGAADERWANPPQPVAAAEHGPSFDHSMVSEEYEHDKKKNPA) are disordered. The Cytoplasmic segment spans residues 1–72 (MNYGAADERW…SDGKIKLTAR (72 aa)). Residues 73–93 (SFMEVGGYAVFLIVLVYVAFA) form a helical membrane-spanning segment. Residues 94–324 (QNSIQSYYYS…YQTSGGTRMM (231 aa)) are Extracellular-facing. N-linked (GlcNAc...) asparagine glycans are attached at residues Asn150 and Asn177. A disulfide bridge connects residues Cys180 and Cys193. Residues 325-345 (IFEGIFCGFILYFIFEELFAI) traverse the membrane as a helical segment. Topologically, residues 346-355 (GRHRLHYLTQ) are cytoplasmic. The helical transmembrane segment at 356–376 (FWNLVDVVLLGFSVATIILSV) threads the bilayer. An N-linked (GlcNAc...) asparagine glycan is attached at Asn377. At 377–409 (NRTKTGVNRVNSVIENGLTNAPFDDVTSSENSY) the chain is on the extracellular side. A helical membrane pass occupies residues 410–430 (LNIKACVVFVAWVKVFKFISV). Over 431–447 (NKTMSQLSSTLTRSAKD) the chain is Cytoplasmic. Residues 448-468 (IGGFAVMFAVFFFAFAQFGYL) traverse the membrane as a helical segment. Residues 469–482 (CFGTQIADYSNLYN) are Extracellular-facing. The pore-forming intramembrane region spans 483 to 497 (SAFALLRLILGDFNF). Over 498–510 (SALESCNRFFGPA) the chain is Extracellular. A helical transmembrane segment spans residues 511-531 (FFIAYVFFVSFILLNMFLAII). Over 532–716 (NDSYVEVKAE…ITSIADKKEE (185 aa)) the chain is Cytoplasmic. Position 534 is a phosphoserine; by CK2 (Ser534). A coiled-coil region spans residues 613–680 (EKVAEDIADE…IEKQRVQQQD (68 aa)). Residues 696–716 (RNRESAARRPTITSIADKKEE) form a disordered region.

The protein belongs to the polycystin family. Post-translationally, phosphorylated. CK2 (kin-3 and kin-10) and calcineurin act antagonistically to regulate the phosphorylation state. As to expression, exclusively expressed in a subset of 3 categories of adult male sensory neurons: ray neurons, hook neurons and head cephalic (CEM) neurons. Expressed in the male tail.

It localises to the cell membrane. It is found in the cell projection. The protein localises to the cilium membrane. The protein resides in the cilium. Its subcellular location is the axon. It localises to the dendrite. It is found in the perikaryon. The protein localises to the endoplasmic reticulum membrane. In terms of biological role, functions as a calcium permeable cation channel. Required for 2 aspects of male mating behavior: response to hermaphrodite contact and vulva location. Acts in the same pathway as lov-1 and atp-2 in response behavior. The polypeptide is Polycystin-2 (Caenorhabditis elegans).